The primary structure comprises 131 residues: Large ribosomal subunit protein bL17 (131 aa).

This sequence belongs to the bacterial ribosomal protein bL17 family. In terms of assembly, part of the 50S ribosomal subunit. Contacts protein L32.

This chain is Large ribosomal subunit protein bL17, found in Thermotoga neapolitana (strain ATCC 49049 / DSM 4359 / NBRC 107923 / NS-E).